The sequence spans 64 residues: Large ribosomal subunit protein uL29 (64 aa).

Belongs to the universal ribosomal protein uL29 family.

In Lacticaseibacillus paracasei (strain ATCC 334 / BCRC 17002 / CCUG 31169 / CIP 107868 / KCTC 3260 / NRRL B-441) (Lactobacillus paracasei), this protein is Large ribosomal subunit protein uL29.